The primary structure comprises 270 residues: Interleukin-1 alpha (270 aa).

The propeptide occupies 1 to 114 (MAKVPDLFED…HDLEETIQPR (114 aa)). A glycan (N-linked (GlcNAc...) asparagine) is linked at Asn46. Position 85 is an N6-acetyllysine (Lys85). The segment at 85–89 (KKRRL) is nuclear localization signal (NLS). Ser90 is subject to Phosphoserine. Asn139 carries N-linked (GlcNAc...) asparagine glycosylation.

It belongs to the IL-1 family. In terms of assembly, monomer. Interacts with TMED10; the interaction mediates the translocation from the cytoplasm into the ERGIC (endoplasmic reticulum-Golgi intermediate compartment) and thereby secretion. Interacts with IL1R1. Interacts with S100A13; this interaction is the first step in the export of IL1A, followed by direct translocation of this complex across the plasma membrane. In terms of processing, acetylated within its nuclear localization sequence, which impacts subcellular localization. Post-translationally, proteolytic processed by CAPN1 in a calcium-dependent manner. Cleavage from 31 kDa precursor to 18 kDa biologically active molecules. Phosphorylated. Phosphorylation greatly enhances susceptibility to digestion and promotes the conversion of pre-IL1A alpha to the biologically active IL1A.

The protein localises to the nucleus. It localises to the cytoplasm. It is found in the secreted. Its function is as follows. Cytokine constitutively present intracellularly in nearly all resting non-hematopoietic cells that plays an important role in inflammation and bridges the innate and adaptive immune systems. After binding to its receptor IL1R1 together with its accessory protein IL1RAP, forms the high affinity interleukin-1 receptor complex. Signaling involves the recruitment of adapter molecules such as MYD88, IRAK1 or IRAK4. In turn, mediates the activation of NF-kappa-B and the three MAPK pathways p38, p42/p44 and JNK pathways. Within the cell, acts as an alarmin and cell death results in its liberation in the extracellular space after disruption of the cell membrane to induce inflammation and alert the host to injury or damage. In addition to its role as a danger signal, which occurs when the cytokine is passively released by cell necrosis, directly senses DNA damage and acts as signal for genotoxic stress without loss of cell integrity. The sequence is that of Interleukin-1 alpha from Rattus norvegicus (Rat).